Consider the following 223-residue polypeptide: Protein BTG4 (223 aa).

The protein belongs to the BTG family. In terms of assembly, interacts with CNOT7. Interacts with EIF4E. Interacts with CNOT8. As to expression, expressed in oocytes after germinal vesicle breakdown. Expressed in testis and in olfactory epithelium.

Functionally, adapter protein that bridges CNOT7, a catalytic subunit of the CCR4-NOT complex, to EIF4E. Facilitates maternal mRNAs decay during the maturation of oocytes and in the fertilized egg, and is required for the maternal-zygotic transition (MZT), zygotic cleavage and initiation of embryonic development. The protein is Protein BTG4 (BTG4) of Homo sapiens (Human).